A 320-amino-acid polypeptide reads, in one-letter code: ATP-dependent 6-phosphofructokinase (320 aa).

Position 12 (Gly-12) interacts with ATP. 22–26 lines the ADP pocket; that stretch reads RSVIR. ATP is bound by residues 73–74 and 103–106; these read RF and GDGS. Residue Asp-104 participates in Mg(2+) binding. 126-128 is a binding site for substrate; that stretch reads TID. Catalysis depends on Asp-128, which acts as the Proton acceptor. Arg-155 is a binding site for ADP. Residues Arg-163 and 170 to 172 each bind substrate; that span reads MGR. ADP contacts are provided by residues 186–188 and 214–216; these read GAE and KRH. Residues Glu-223, Arg-244, and 250–253 each bind substrate; that span reads HIQR.

Belongs to the phosphofructokinase type A (PFKA) family. ATP-dependent PFK group I subfamily. Prokaryotic clade 'B1' sub-subfamily. Homotetramer. Mg(2+) serves as cofactor.

It localises to the cytoplasm. It carries out the reaction beta-D-fructose 6-phosphate + ATP = beta-D-fructose 1,6-bisphosphate + ADP + H(+). The protein operates within carbohydrate degradation; glycolysis; D-glyceraldehyde 3-phosphate and glycerone phosphate from D-glucose: step 3/4. Its activity is regulated as follows. Allosterically activated by ADP and other diphosphonucleosides, and allosterically inhibited by phosphoenolpyruvate. Its function is as follows. Catalyzes the phosphorylation of D-fructose 6-phosphate to fructose 1,6-bisphosphate by ATP, the first committing step of glycolysis. This Tolumonas auensis (strain DSM 9187 / NBRC 110442 / TA 4) protein is ATP-dependent 6-phosphofructokinase.